The following is an 852-amino-acid chain: Disks large homolog 2 (852 aa).

S-palmitoyl cysteine attachment occurs at residues cysteine 5 and cysteine 7. A Phosphoserine modification is found at serine 28. The residue at position 58 (tyrosine 58) is a Phosphotyrosine. Serine 65 is modified (phosphoserine). PDZ domains follow at residues 98 to 184 and 193 to 279; these read EITL…VRRR and EIKL…VGKP. A phosphoserine mark is found at serine 307, serine 328, serine 360, serine 365, serine 406, and serine 414. The PDZ 3 domain occupies 421 to 501; it reads KVVLHKGSTG…QTVTIIAQYQ (81 aa). Tyrosine 505 is modified (phosphotyrosine). 3 positions are modified to phosphoserine: serine 528, serine 530, and serine 553. An SH3 domain is found at 536–606; it reads KRSLYVRAMF…PSKRRVERKE (71 aa). The region spanning 662–837 is the Guanylate kinase-like domain; it reads TRPVIILGPM…IYNQCKLVIE (176 aa). Residues tyrosine 732 and tyrosine 737 each carry the phosphotyrosine modification.

It belongs to the MAGUK family. In terms of assembly, interacts through its PDZ domains with NETO1. Interacts with NOS1/nNOS through second PDZ domain. Interacts with KCNJ2/Kir2.1 (via C-terminus) through one of its PDZ domains. Interacts with KCNJ4. Interacts with FRMPD4 (via C-terminus). Interacts with LRFN1. Interacts with LRFN2 and LRFN4. Interacts with FASLG. Interacts with ADAM22. Interacts with DGKI (via PDZ-binding motif). In terms of processing, palmitoylation of isoform 1 and isoform 2 is not required for targeting to postsynaptic density. As to expression, detected in juxtaparanodal zones in the central nervous system and at nerve terminal plexuses of basket cells in the cerebellum (at protein level). Brain. High levels in cerebellar Purkinje cells. Expressed in pyramidal cells of the Ammons's horn and granular cells of the dentate gyrus in the hippocampus as well as cerebral cortex and striatum. High levels in dorsal horn of spinal cord.

It localises to the cell membrane. The protein localises to the postsynaptic density. Its subcellular location is the synapse. The protein resides in the cell projection. It is found in the axon. It localises to the membrane. The protein localises to the perikaryon. Required for perception of chronic pain through NMDA receptor signaling. Regulates surface expression of NMDA receptors in dorsal horn neurons of the spinal cord. Interacts with the cytoplasmic tail of NMDA receptor subunits as well as inward rectifying potassium channels. Involved in regulation of synaptic stability at cholinergic synapses. Part of the postsynaptic protein scaffold of excitatory synapses. This Rattus norvegicus (Rat) protein is Disks large homolog 2 (Dlg2).